Here is a 202-residue protein sequence, read N- to C-terminus: Imidazoleglycerol-phosphate dehydratase (202 aa).

Belongs to the imidazoleglycerol-phosphate dehydratase family.

The protein resides in the cytoplasm. The enzyme catalyses D-erythro-1-(imidazol-4-yl)glycerol 3-phosphate = 3-(imidazol-4-yl)-2-oxopropyl phosphate + H2O. It functions in the pathway amino-acid biosynthesis; L-histidine biosynthesis; L-histidine from 5-phospho-alpha-D-ribose 1-diphosphate: step 6/9. This chain is Imidazoleglycerol-phosphate dehydratase, found in Chelativorans sp. (strain BNC1).